The chain runs to 126 residues: Aspartate 1-decarboxylase (126 aa).

Serine 25 (schiff-base intermediate with substrate; via pyruvic acid) is an active-site residue. Position 25 is a pyruvic acid (Ser) (serine 25). Position 57 (threonine 57) interacts with substrate. Tyrosine 58 (proton donor) is an active-site residue. 73–75 is a binding site for substrate; that stretch reads GAA.

It belongs to the PanD family. As to quaternary structure, heterooctamer of four alpha and four beta subunits. It depends on pyruvate as a cofactor. Post-translationally, is synthesized initially as an inactive proenzyme, which is activated by self-cleavage at a specific serine bond to produce a beta-subunit with a hydroxyl group at its C-terminus and an alpha-subunit with a pyruvoyl group at its N-terminus.

Its subcellular location is the cytoplasm. It carries out the reaction L-aspartate + H(+) = beta-alanine + CO2. Its pathway is cofactor biosynthesis; (R)-pantothenate biosynthesis; beta-alanine from L-aspartate: step 1/1. Catalyzes the pyruvoyl-dependent decarboxylation of aspartate to produce beta-alanine. The polypeptide is Aspartate 1-decarboxylase (Saccharophagus degradans (strain 2-40 / ATCC 43961 / DSM 17024)).